The chain runs to 132 residues: MSGGKGGKAGSAAKASQSRSAKAGLTFPVGRVHRLLRRGNYAQRIGSGAPVYLTAVLEYLAAEILELAGNAARDNKKTRIIPRHLQLAIRNDDELNKLLGNVTIAQGGVLPNIHQNLLPKKSAKATKASQEL.

N-acetylserine is present on Ser-2. N6-acetyllysine occurs at positions 5 and 8. 2 positions are modified to N6-succinyllysine: Lys-14 and Lys-22. Residue Gln-106 is modified to N5-methylglutamine. Lys-120 bears the N6-malonyllysine; alternate mark. Lys-127 participates in a covalent cross-link: Glycyl lysine isopeptide (Lys-Gly) (interchain with G-Cter in SUMO). Ser-129 is modified (phosphoserine). Positions 129–130 match the [ST]-Q motif motif; it reads SQ.

The protein belongs to the histone H2A family. As to quaternary structure, the nucleosome is a histone octamer containing two molecules each of H2A, H2B, H3 and H4 assembled in one H3-H4 heterotetramer and two H2A-H2B heterodimers. The octamer wraps approximately 147 bp of DNA. Post-translationally, phosphorylated to form H2AS128ph (gamma-H2A) in response to DNA double-strand breaks (DSBs) generated by exogenous genotoxic agents and by stalled replication forks. Phosphorylation is dependent on the DNA damage checkpoint kinases MEC1/ATR and TEL1/ATM, spreads on either side of a detected DSB site and may mark the surrounding chromatin for recruitment of proteins required for DNA damage signaling and repair. Gamma-H2A interacts with ARP4, a shared component of the NuA4 histone acetyltransferase complex and the INO80 and SWR1 chromatin remodeling complexes, and serves to recruit first NuA4, mediating histone H4 acetylation, and subsequently the INO80/SWR1 complexes, facilitating DNA resection, to DSB sites. Gamma-H2A is required for sequestering cohesin around the break site, which is important for efficient post-replicative double-strand break repair by homologous recombination, holding the damaged chromatid close to its undamaged sister template. Gamma-H2A is removed from the DNA prior to the strand invasion-primer extension step of the repair process and subsequently dephosphorylated by PPH3, a component of the histone H2A phosphatase complex (HTP-C). Dephosphorylation is necessary for efficient recovery from the DNA damage checkpoint. N-acetylated by NAT4. In terms of processing, acetylated by ESA1, a component of the NuA4 histone acetyltransferase (HAT) complex, to form H2AK4ac and H2AK7ac. Post-translationally, glutamine methylation at Gln-106 (H2AQ105me) by NOP1 is specifically dedicated to polymerase I. It is present at 35S ribosomal DNA locus and impairs binding of the FACT complex. Sumoylated to from H2AK126su. May lead to transcriptional repression.

The protein localises to the nucleus. It is found in the chromosome. Its function is as follows. Core component of nucleosome which plays a central role in DNA double strand break (DSB) repair. Nucleosomes wrap and compact DNA into chromatin, limiting DNA accessibility to the cellular machineries which require DNA as a template. Histones thereby play a central role in transcription regulation, DNA repair, DNA replication and chromosomal stability. DNA accessibility is regulated via a complex set of post-translational modifications of histones, also called histone code, and nucleosome remodeling. This Saccharomyces cerevisiae (strain ATCC 204508 / S288c) (Baker's yeast) protein is Histone H2A.1 (HTA1).